We begin with the raw amino-acid sequence, 120 residues long: Large ribosomal subunit protein bL19 (120 aa).

The protein belongs to the bacterial ribosomal protein bL19 family.

In terms of biological role, this protein is located at the 30S-50S ribosomal subunit interface and may play a role in the structure and function of the aminoacyl-tRNA binding site. The sequence is that of Large ribosomal subunit protein bL19 from Crocosphaera subtropica (strain ATCC 51142 / BH68) (Cyanothece sp. (strain ATCC 51142)).